The chain runs to 218 residues: Thiamine-phosphate synthase (218 aa).

4-amino-2-methyl-5-(diphosphooxymethyl)pyrimidine is bound by residues 36-40 (QVRSK) and aspartate 70. Aspartate 71 and aspartate 94 together coordinate Mg(2+). Threonine 113 lines the 4-amino-2-methyl-5-(diphosphooxymethyl)pyrimidine pocket. A 2-[(2R,5Z)-2-carboxy-4-methylthiazol-5(2H)-ylidene]ethyl phosphate-binding site is contributed by 141–143 (TPT). Lysine 144 contacts 4-amino-2-methyl-5-(diphosphooxymethyl)pyrimidine.

It belongs to the thiamine-phosphate synthase family. The cofactor is Mg(2+).

It carries out the reaction 2-[(2R,5Z)-2-carboxy-4-methylthiazol-5(2H)-ylidene]ethyl phosphate + 4-amino-2-methyl-5-(diphosphooxymethyl)pyrimidine + 2 H(+) = thiamine phosphate + CO2 + diphosphate. It catalyses the reaction 2-(2-carboxy-4-methylthiazol-5-yl)ethyl phosphate + 4-amino-2-methyl-5-(diphosphooxymethyl)pyrimidine + 2 H(+) = thiamine phosphate + CO2 + diphosphate. The enzyme catalyses 4-methyl-5-(2-phosphooxyethyl)-thiazole + 4-amino-2-methyl-5-(diphosphooxymethyl)pyrimidine + H(+) = thiamine phosphate + diphosphate. It functions in the pathway cofactor biosynthesis; thiamine diphosphate biosynthesis; thiamine phosphate from 4-amino-2-methyl-5-diphosphomethylpyrimidine and 4-methyl-5-(2-phosphoethyl)-thiazole: step 1/1. Its function is as follows. Condenses 4-methyl-5-(beta-hydroxyethyl)thiazole monophosphate (THZ-P) and 2-methyl-4-amino-5-hydroxymethyl pyrimidine pyrophosphate (HMP-PP) to form thiamine monophosphate (TMP). The protein is Thiamine-phosphate synthase of Corynebacterium jeikeium (strain K411).